Consider the following 248-residue polypeptide: Aliphatic sulfonates import ATP-binding protein SsuB 2 (248 aa).

Residues 14–230 (VRVESLVRSF…DHGHRRFGEI (217 aa)) enclose the ABC transporter domain. Residue 46–53 (GRSGSGKS) coordinates ATP.

The protein belongs to the ABC transporter superfamily. Aliphatic sulfonates importer (TC 3.A.1.17.2) family. The complex is composed of two ATP-binding proteins (SsuB), two transmembrane proteins (SsuC) and a solute-binding protein (SsuA).

The protein localises to the cell inner membrane. The enzyme catalyses ATP + H2O + aliphatic sulfonate-[sulfonate-binding protein]Side 1 = ADP + phosphate + aliphatic sulfonateSide 2 + [sulfonate-binding protein]Side 1.. Its function is as follows. Part of the ABC transporter complex SsuABC involved in aliphatic sulfonates import. Responsible for energy coupling to the transport system. This Mesorhizobium japonicum (strain LMG 29417 / CECT 9101 / MAFF 303099) (Mesorhizobium loti (strain MAFF 303099)) protein is Aliphatic sulfonates import ATP-binding protein SsuB 2.